A 70-amino-acid chain; its full sequence is DNA-directed RNA polymerase subunit epsilon (70 aa).

Belongs to the RNA polymerase subunit epsilon family. RNAP is composed of a core of 2 alpha, a beta and a beta' subunit. The core is associated with a delta subunit, and at least one of epsilon or omega. When a sigma factor is associated with the core the holoenzyme is formed, which can initiate transcription.

The catalysed reaction is RNA(n) + a ribonucleoside 5'-triphosphate = RNA(n+1) + diphosphate. Its function is as follows. A non-essential component of RNA polymerase (RNAP). This Limosilactobacillus reuteri (strain DSM 20016) (Lactobacillus reuteri) protein is DNA-directed RNA polymerase subunit epsilon.